Reading from the N-terminus, the 346-residue chain is Biotin synthase (346 aa).

Positions 38–256 constitute a Radical SAM core domain; it reads RQVQVSTLLS…IAIARIMMPT (219 aa). Residues cysteine 53, cysteine 57, and cysteine 60 each coordinate [4Fe-4S] cluster. Cysteine 97, cysteine 128, cysteine 188, and arginine 260 together coordinate [2Fe-2S] cluster.

It belongs to the radical SAM superfamily. Biotin synthase family. As to quaternary structure, homodimer. [4Fe-4S] cluster serves as cofactor. The cofactor is [2Fe-2S] cluster.

It carries out the reaction (4R,5S)-dethiobiotin + (sulfur carrier)-SH + 2 reduced [2Fe-2S]-[ferredoxin] + 2 S-adenosyl-L-methionine = (sulfur carrier)-H + biotin + 2 5'-deoxyadenosine + 2 L-methionine + 2 oxidized [2Fe-2S]-[ferredoxin]. It participates in cofactor biosynthesis; biotin biosynthesis; biotin from 7,8-diaminononanoate: step 2/2. Functionally, catalyzes the conversion of dethiobiotin (DTB) to biotin by the insertion of a sulfur atom into dethiobiotin via a radical-based mechanism. The polypeptide is Biotin synthase (Klebsiella pneumoniae (strain 342)).